The sequence spans 490 residues: Acetyl-coenzyme A carboxylase carboxyl transferase subunit beta, chloroplastic (490 aa).

In terms of domain architecture, CoA carboxyltransferase N-terminal spans 228-490; that stretch reads LWVQCENCYG…FKLHAFFPLN (263 aa). Zn(2+)-binding residues include C232, C235, C251, and C254. The C4-type zinc finger occupies 232–254; that stretch reads CENCYGLNYKKLLKSKMNICDQC.

It belongs to the AccD/PCCB family. Acetyl-CoA carboxylase is a heterohexamer composed of biotin carboxyl carrier protein, biotin carboxylase and 2 subunits each of ACCase subunit alpha and ACCase plastid-coded subunit beta (accD). It depends on Zn(2+) as a cofactor.

It localises to the plastid. The protein resides in the chloroplast stroma. The catalysed reaction is N(6)-carboxybiotinyl-L-lysyl-[protein] + acetyl-CoA = N(6)-biotinyl-L-lysyl-[protein] + malonyl-CoA. It participates in lipid metabolism; malonyl-CoA biosynthesis; malonyl-CoA from acetyl-CoA: step 1/1. Component of the acetyl coenzyme A carboxylase (ACC) complex. Biotin carboxylase (BC) catalyzes the carboxylation of biotin on its carrier protein (BCCP) and then the CO(2) group is transferred by the transcarboxylase to acetyl-CoA to form malonyl-CoA. In Eucalyptus globulus subsp. globulus (Tasmanian blue gum), this protein is Acetyl-coenzyme A carboxylase carboxyl transferase subunit beta, chloroplastic.